Reading from the N-terminus, the 501-residue chain is Cystine/glutamate transporter (501 aa).

Residues 1–43 (MVRKPVVSTISKGGYLQGNVNGRLPSLGNKEPPGQEKVQLKRK) are Cytoplasmic-facing. Position 26 is a phosphoserine (serine 26). Residues 44–64 (VTLLRGVSIIIGTIIGAGIFI) traverse the membrane as a helical segment. Over 65-74 (SPKGVLQNTG) the chain is Extracellular. A helical transmembrane segment spans residues 75–95 (SVGMSLTIWTVCGVLSLFGAL). The Cytoplasmic segment spans residues 96-101 (SYAELG). An intramembrane segment occupies 102–116 (TTIKKSGGHYTYILE). Residues 117–130 (VFGPLPAFVRVWVE) are Cytoplasmic-facing. A helical transmembrane segment spans residues 131 to 150 (LLIIRPAATAVISLAFGRYI). Position 135 (arginine 135) interacts with L-glutamate. Residues 151–163 (LEPFFIQCEIPEL) lie on the Extracellular side of the membrane. Residues 164–179 (AIKLITAVGITVVMVL) form a helical membrane-spanning segment. The Cytoplasmic segment spans residues 180–193 (NSMSVSWSARIQIF). Residues 194–210 (LTFCKLTAILIIIVPGV) form a helical membrane-spanning segment. At 211-234 (MQLIKGQTQNFKDAFSGRDSSITR) the chain is on the extracellular side. The chain crosses the membrane as a helical span at residues 235 to 255 (LPLAFYYGMYAYAGWFYLNFV). Position 244 (tyrosine 244) interacts with L-glutamate. The Cytoplasmic segment spans residues 256 to 265 (TEEVENPEKT). The helical transmembrane segment at 266-286 (IPLAICISMAIVTIGYVLTNV) threads the bilayer. At 287–317 (AYFTTINAEELLLSNAVAVTFSERLLGNFSL) the chain is on the extracellular side. Residue asparagine 314 is glycosylated (N-linked (GlcNAc...) asparagine). Residues 318–338 (AVPIFVALSCFGSMNGGVFAV) traverse the membrane as a helical segment. Residues 339 to 364 (SRLFYVASREGHLPEILSMIHVRKHT) lie on the Cytoplasmic side of the membrane. Residues 365 to 385 (PLPAVIVLHPLTMIMLFSGDL) form a helical membrane-spanning segment. Over 386–387 (DS) the chain is Extracellular. Residues 388 to 408 (LLNFLSFARWLFIGLAVAGLI) traverse the membrane as a helical segment. Over 409-422 (YLRYKCPDMHRPFK) the chain is Cytoplasmic. The helical transmembrane segment at 423–443 (VPLFIPALFSFTCLFMVALSL) threads the bilayer. Topologically, residues 444-449 (YSDPFS) are extracellular. The chain crosses the membrane as a helical span at residues 450–470 (TGIGSVITLTGVPAYYLFIIW). The Cytoplasmic segment spans residues 471–501 (DKKPRWFRIMSEKITRTLQIILEVVPEEDKL).

This sequence belongs to the amino acid-polyamine-organocation (APC) superfamily. L-type amino acid transporter (LAT) (TC 2.A.3.8) family. In terms of assembly, disulfide-linked heterodimer with the amino acid transport protein SLC3A2/4F2hc; this interaction mediates cell membrane localization.

It is found in the cell membrane. The protein localises to the cell projection. Its subcellular location is the microvillus membrane. The catalysed reaction is L-cystine(out) + L-glutamate(in) = L-cystine(in) + L-glutamate(out). It carries out the reaction an L-alpha-amino acid(in) + L-kynurenine(out) = an L-alpha-amino acid(out) + L-kynurenine(in). It catalyses the reaction N-acetyl-L-cysteine(out) + L-glutamate(in) = N-acetyl-L-cysteine(in) + L-glutamate(out). Its function is as follows. Heterodimer with SLC3A2, that functions as an antiporter by mediating the exchange of extracellular anionic L-cystine and intracellular L-glutamate across the cellular plasma membrane. Provides L-cystine for the maintenance of the redox balance between extracellular L-cystine and L-cysteine and for the maintenance of the intracellular levels of glutathione that is essential for cells protection from oxidative stress. The transport is sodium-independent, electroneutral with a stoichiometry of 1:1, and is drove by the high intracellular concentration of L-glutamate and the intracellular reduction of L-cystine. In addition, mediates the import of L-kynurenine leading to anti-ferroptotic signaling propagation required to maintain L-cystine and glutathione homeostasis. Moreover, mediates N-acetyl-L-cysteine uptake into the placenta leading to subsequently down-regulation of pathways associated with oxidative stress, inflammation and apoptosis. In vitro can also transport L-aspartate. May participate in astrocyte and meningeal cell proliferation during development and can provide neuroprotection by promoting glutathione synthesis and delivery from non-neuronal cells such as astrocytes and meningeal cells to immature neurons. Controls the production of pheomelanin pigment directly. The protein is Cystine/glutamate transporter of Pongo abelii (Sumatran orangutan).